The following is a 1270-amino-acid chain: Vigilin (1270 aa).

The segment covering 1-11 (MSSVAVLTQES) has biased composition (polar residues). 2 disordered regions span residues 1–23 (MSSV…TQQQ) and 28–47 (ALNS…FPPL). KH domains are found at residues 150–188 (ASAT…IPRP), 219–260 (DKRA…IPPP), 291–333 (KKKT…IPPT), 360–402 (ANSF…EFTE), 431–473 (INRT…IPPD), 504–545 (ENER…NFPD), 577–619 (VENS…LPGR), 651–693 (ANIT…FPTE), 724–766 (QTKS…FPTS), 798–840 (DNVV…LPTV), and 872–913 (EAQV…FPDR). Residues 911–947 (PDREENPAPVAEPALQENGEEGGEGKDGKDADPSSPR) are disordered. Basic and acidic residues predominate over residues 933-947 (GEGKDGKDADPSSPR). KH domains follow at residues 970-1012 (ALVP…VPAP), 1051-1093 (ALRS…FPDK), and 1126-1168 (LEQM…FPQS). The interval 1217 to 1270 (SHEESKVPSKGFVVRDAPCGTVNNEKAPDMSSSEDFPSFGAQVAPKTLPWGPKR) is disordered.

The protein localises to the cytoplasm. The polypeptide is Vigilin (HDLBP) (Gallus gallus (Chicken)).